Consider the following 570-residue polypeptide: Methyl-coenzyme M reductase subunit alpha (570 aa).

Gln161 contacts coenzyme F430. Coenzyme B is bound by residues Arg239, 270 to 271, and Arg284; that span reads KH. The residue at position 271 (His271) is a Pros-methylhistidine. 5-methylarginine is present on Arg285. 2 residues coordinate coenzyme M: Tyr346 and Phe464. Position 465 is a 1-thioglycine (Gly465). Asp470 bears the (Z)-2,3-didehydroaspartate mark. At Cys472 the chain carries S-methylcysteine.

It belongs to the methyl-coenzyme M reductase alpha subunit family. MCR is a hexamer of two alpha, two beta, and two gamma chains, forming a dimer of heterotrimers. Requires coenzyme F430 as cofactor. Post-translationally, the alpha subunit contains five modified amino acids near the active site region. Is methylated on His-271, Arg-285 and Cys-472, probably by the action of specific S-adenosylmethionine-dependent methyltransferases. Also contains a thioglycine at position 465, forming a thiopeptide bond. Contains a didehydroaspartate residue at position 470. The methylation on C5 of Arg-285 is a post-translational methylation not essential in vivo, but which plays a role for the stability and structural integrity of MCR. Does not show a methylation at Gln-420, as shown for M.marburgensis.

Its subcellular location is the cytoplasm. The catalysed reaction is coenzyme B + methyl-coenzyme M = methane + coenzyme M-coenzyme B heterodisulfide. It participates in one-carbon metabolism; methyl-coenzyme M reduction; methane from methyl-coenzyme M: step 1/1. Its function is as follows. Component of the methyl-coenzyme M reductase (MCR) I that catalyzes the reductive cleavage of methyl-coenzyme M (CoM-S-CH3 or 2-(methylthio)ethanesulfonate) using coenzyme B (CoB or 7-mercaptoheptanoylthreonine phosphate) as reductant which results in the production of methane and the mixed heterodisulfide of CoB and CoM (CoM-S-S-CoB). This is the final step in methanogenesis. This chain is Methyl-coenzyme M reductase subunit alpha (mcrA), found in Methanosarcina barkeri (strain Fusaro / DSM 804).